The sequence spans 661 residues: Ubiquitin carboxyl-terminal hydrolase 51 (661 aa).

A disordered region spans residues 1-144; sequence MRGTQGAQEM…SENSLLEVGS (144 aa). Residues 21-30 show a composition bias toward polar residues; the sequence is TSENLTSRGS. Residues 53 to 71 show a composition bias toward basic residues; that stretch reads PRRKPRPRPQPRSRSRGGR. Over residues 75 to 96 the composition is skewed to pro residues; sequence APPPPPAKPPPPPPAPPPPPLP. A UBP-type zinc finger spans residues 149-267; the sequence is TGCCHVESFK…KETKEKILGL (119 aa). C151, H153, C192, C195, C205, C208, C213, H218, H222, H228, C241, and C244 together coordinate Zn(2+). One can recognise a USP domain in the interval 320-656; that stretch reads RGLINLGNTC…EGYLLFYHRQ (337 aa). C329 serves as the catalytic Nucleophile. Residue H615 is the Proton acceptor of the active site.

The protein belongs to the peptidase C19 family. In terms of assembly, interacts with H2A.

Its subcellular location is the chromosome. It catalyses the reaction Thiol-dependent hydrolysis of ester, thioester, amide, peptide and isopeptide bonds formed by the C-terminal Gly of ubiquitin (a 76-residue protein attached to proteins as an intracellular targeting signal).. Specifically deubiquitinates 'Lys-14' (H2AK13Ub) and 'Lys-16'(H2AK15Ub) of histone H2A regulating the DNA damage response at double-strand breaks (DSBs). USP51 is recruited to chromatin after DNA damage and regulates the dynamic assembly/disassembly of TP53BP1 and BRCA1. Functions in DNA double-strand break repair also by mediating the deubiquitination and subsequent stabilization of DGCR8, leading to the recruitment of DGCR8 binding partners to double strand breaks such as RNF168 or MDC1. In addition, promotes the deubiquitination and stabilization of the transcriptional repressor ZEB1. This Mus musculus (Mouse) protein is Ubiquitin carboxyl-terminal hydrolase 51.